The chain runs to 123 residues: Small ribosomal subunit protein uS12 (123 aa).

A disordered region spans residues 9 to 32 (ANPREVQKSRKKVPALQQSPQKRG). Aspartate 89 is subject to 3-methylthioaspartic acid.

Belongs to the universal ribosomal protein uS12 family. Part of the 30S ribosomal subunit. Contacts proteins S8 and S17. May interact with IF1 in the 30S initiation complex.

Functionally, with S4 and S5 plays an important role in translational accuracy. In terms of biological role, interacts with and stabilizes bases of the 16S rRNA that are involved in tRNA selection in the A site and with the mRNA backbone. Located at the interface of the 30S and 50S subunits, it traverses the body of the 30S subunit contacting proteins on the other side and probably holding the rRNA structure together. The combined cluster of proteins S8, S12 and S17 appears to hold together the shoulder and platform of the 30S subunit. This Bradyrhizobium sp. (strain BTAi1 / ATCC BAA-1182) protein is Small ribosomal subunit protein uS12.